Reading from the N-terminus, the 229-residue chain is Orotate phosphoribosyltransferase (229 aa).

Residues Arg-107, Lys-108, Lys-111, His-113, and 133-141 (EDLTTAGGS) each bind 5-phospho-alpha-D-ribose 1-diphosphate. Position 137 (Thr-137) interacts with orotate.

It belongs to the purine/pyrimidine phosphoribosyltransferase family. PyrE subfamily. Homodimer. It depends on Mg(2+) as a cofactor.

It carries out the reaction orotidine 5'-phosphate + diphosphate = orotate + 5-phospho-alpha-D-ribose 1-diphosphate. The protein operates within pyrimidine metabolism; UMP biosynthesis via de novo pathway; UMP from orotate: step 1/2. Functionally, catalyzes the transfer of a ribosyl phosphate group from 5-phosphoribose 1-diphosphate to orotate, leading to the formation of orotidine monophosphate (OMP). This Rhizobium etli (strain CIAT 652) protein is Orotate phosphoribosyltransferase.